Here is a 189-residue protein sequence, read N- to C-terminus: Large ribosomal subunit protein bL9 (189 aa).

The protein belongs to the bacterial ribosomal protein bL9 family.

Its function is as follows. Binds to the 23S rRNA. In Beijerinckia indica subsp. indica (strain ATCC 9039 / DSM 1715 / NCIMB 8712), this protein is Large ribosomal subunit protein bL9.